Reading from the N-terminus, the 292-residue chain is Nucleotide-binding protein SACE_2139 (292 aa).

Residue 15–22 (GLSGAGRS) participates in ATP binding. A GTP-binding site is contributed by 66 to 69 (DVRS).

Belongs to the RapZ-like family.

In terms of biological role, displays ATPase and GTPase activities. The sequence is that of Nucleotide-binding protein SACE_2139 from Saccharopolyspora erythraea (strain ATCC 11635 / DSM 40517 / JCM 4748 / NBRC 13426 / NCIMB 8594 / NRRL 2338).